Consider the following 240-residue polypeptide: Ion-translocating oxidoreductase complex subunit E (240 aa).

Transmembrane regions (helical) follow at residues 41-61, 71-91, 95-115, 130-150, and 184-204; these read LGLG…VSLV, LPAF…LMQA, ELYQ…VILG, SFDG…LGGL, and GFLL…LIAL.

This sequence belongs to the NqrDE/RnfAE family. As to quaternary structure, the complex is composed of six subunits: RnfA, RnfB, RnfC, RnfD, RnfE and RnfG.

It localises to the cell inner membrane. Part of a membrane-bound complex that couples electron transfer with translocation of ions across the membrane. The polypeptide is Ion-translocating oxidoreductase complex subunit E (Pseudomonas aeruginosa (strain ATCC 15692 / DSM 22644 / CIP 104116 / JCM 14847 / LMG 12228 / 1C / PRS 101 / PAO1)).